Consider the following 129-residue polypeptide: Small ribosomal subunit protein uS11 (129 aa).

Belongs to the universal ribosomal protein uS11 family. As to quaternary structure, part of the 30S ribosomal subunit. Interacts with proteins S7 and S18. Binds to IF-3.

In terms of biological role, located on the platform of the 30S subunit, it bridges several disparate RNA helices of the 16S rRNA. Forms part of the Shine-Dalgarno cleft in the 70S ribosome. This chain is Small ribosomal subunit protein uS11, found in Geobacillus thermodenitrificans (strain NG80-2).